The following is a 396-amino-acid chain: 8-amino-7-oxononanoate synthase (396 aa).

Arginine 19 contacts substrate. A pyridoxal 5'-phosphate-binding site is contributed by 106–107 (GY). Residue histidine 131 coordinates substrate. Pyridoxal 5'-phosphate is bound by residues serine 176, histidine 204, and threonine 233. Lysine 236 carries the N6-(pyridoxal phosphate)lysine modification. Threonine 350 is a substrate binding site.

Belongs to the class-II pyridoxal-phosphate-dependent aminotransferase family. BioF subfamily. Homodimer. It depends on pyridoxal 5'-phosphate as a cofactor.

The catalysed reaction is 6-carboxyhexanoyl-[ACP] + L-alanine + H(+) = (8S)-8-amino-7-oxononanoate + holo-[ACP] + CO2. Its pathway is cofactor biosynthesis; biotin biosynthesis. Catalyzes the decarboxylative condensation of pimeloyl-[acyl-carrier protein] and L-alanine to produce 8-amino-7-oxononanoate (AON), [acyl-carrier protein], and carbon dioxide. The sequence is that of 8-amino-7-oxononanoate synthase from Pseudomonas syringae pv. syringae (strain B728a).